We begin with the raw amino-acid sequence, 305 residues long: Translation initiation factor eIF2B subunit alpha (305 aa).

Lys35 is modified (N6-acetyllysine).

This sequence belongs to the eIF-2B alpha/beta/delta subunits family. In terms of assembly, component of the translation initiation factor 2B (eIF2B) complex which is a heterodecamer of two sets of five different subunits: alpha, beta, gamma, delta and epsilon. Subunits alpha, beta and delta comprise a regulatory subcomplex and subunits epsilon and gamma comprise a catalytic subcomplex. Within the complex, the hexameric regulatory complex resides at the center, with the two heterodimeric catalytic subcomplexes bound on opposite sides.

It is found in the cytoplasm. Its subcellular location is the cytosol. With respect to regulation, activated by the chemical integrated stress response (ISR) inhibitor ISRIB which stimulates guanine nucleotide exchange factor activity for both phosphorylated and unphosphorylated eIF2. Acts as a component of the translation initiation factor 2B (eIF2B) complex, which catalyzes the exchange of GDP for GTP on eukaryotic initiation factor 2 (eIF2) gamma subunit. Its guanine nucleotide exchange factor activity is repressed when bound to eIF2 complex phosphorylated on the alpha subunit, thereby limiting the amount of methionyl-initiator methionine tRNA available to the ribosome and consequently global translation is repressed. This is Translation initiation factor eIF2B subunit alpha (EIF2B1) from Macaca fascicularis (Crab-eating macaque).